The following is a 107-amino-acid chain: Chlorobenzene dioxygenase, ferredoxin component (107 aa).

Residues 4-99 (TYIMRQSDLP…IKVEGGDVHV (96 aa)) form the Rieske domain. 4 residues coordinate [2Fe-2S] cluster: cysteine 43, histidine 45, cysteine 62, and histidine 65.

The protein belongs to the bacterial ring-hydroxylating dioxygenase ferredoxin component family. This dioxygenase system consists of four proteins: the two subunits of the oxygenase component (TecA1 and TecA2), a ferredoxin (TecA3) and a ferredoxin reductase (TecA4). It depends on [2Fe-2S] cluster as a cofactor.

It participates in aromatic compound metabolism. Its function is as follows. Part of the chlorobenzene dioxygenase system that catalyzes the dihydroxylation of a range of aromatic compounds, including chlorinated benzenes and toluenes, and dinuclear aromatics such as biphenyl and dibenzo-p-dioxin. This is Chlorobenzene dioxygenase, ferredoxin component from Cupriavidus sp. (strain PS12).